Reading from the N-terminus, the 539-residue chain is Inosine-5'-monophosphate dehydrogenase (539 aa).

CBS domains are found at residues 140–196 and 200–257; these read IIVN…DMPI and MTRE…PRAC. Residues Asp292 and 343-345 each bind NAD(+); that span reads GIG. Residues Gly345 and Gly347 each contribute to the K(+) site. Ser348 provides a ligand contact to IMP. Cys350 provides a ligand contact to K(+). Catalysis depends on Cys350, which acts as the Thioimidate intermediate. IMP contacts are provided by residues 383-385, 406-407, and 430-434; these read DGG, GS, and YRGMG. Arg446 acts as the Proton acceptor in catalysis. Glu460 contributes to the IMP binding site. Residues Glu514 and His516 each coordinate K(+). Residues 517–539 are disordered; the sequence is PHDIAITQEAPNYSPDVHSGDAG.

This sequence belongs to the IMPDH/GMPR family. As to quaternary structure, homotetramer. K(+) serves as cofactor.

It carries out the reaction IMP + NAD(+) + H2O = XMP + NADH + H(+). The protein operates within purine metabolism; XMP biosynthesis via de novo pathway; XMP from IMP: step 1/1. Its activity is regulated as follows. Mycophenolic acid (MPA) is a non-competitive inhibitor that prevents formation of the closed enzyme conformation by binding to the same site as the amobile flap. In contrast, mizoribine monophosphate (MZP) is a competitive inhibitor that induces the closed conformation. MPA is a potent inhibitor of mammalian IMPDHs but a poor inhibitor of the bacterial enzymes. MZP is a more potent inhibitor of bacterial IMPDH. In terms of biological role, catalyzes the conversion of inosine 5'-phosphate (IMP) to xanthosine 5'-phosphate (XMP), the first committed and rate-limiting step in the de novo synthesis of guanine nucleotides, and therefore plays an important role in the regulation of cell growth. This is Inosine-5'-monophosphate dehydrogenase from Rhodopirellula baltica (strain DSM 10527 / NCIMB 13988 / SH1).